A 536-amino-acid polypeptide reads, in one-letter code: Transcription factor cheR (536 aa).

The segment at residues 19–57 (CDRCHRHKLRCERSSVIVNGGVAVPLGPCKRCLKACIPC) is a DNA-binding region (zn(2)-C6 fungal-type). 2 disordered regions span residues 70-122 (AKTG…LSGT) and 220-243 (ALTDVEKASTGSSKSAPERGPREE). Residues 88–108 (AASPAKRAPSPARRPTASTPR) are compositionally biased toward low complexity.

The protein resides in the nucleus. In terms of biological role, transcription factor; part of the gene cluster that mediates the biosynthesis of chaetoglobosin A which has a unique inhibitory activity against actin polymerization in mammalian cells. Chaetoglobosin A and its intermediates are involved in the morphological differentiation of C.globosum. Binds directly to asymmetric direct repeats present in the promoters of the chaetoglobosin A cluster genes. This Chaetomium globosum (strain ATCC 6205 / CBS 148.51 / DSM 1962 / NBRC 6347 / NRRL 1970) (Soil fungus) protein is Transcription factor cheR.